The following is a 111-amino-acid chain: Colicin-Ia immunity protein (111 aa).

Helical transmembrane passes span leucine 33–isoleucine 53 and threonine 85–isoleucine 105.

Its subcellular location is the cell membrane. Its function is as follows. This protein is able to protect a cell, which harbors the plasmid ColIa-CA53 encoding colicin Ia, against colicin Ia. This chain is Colicin-Ia immunity protein, found in Escherichia coli.